The primary structure comprises 872 residues: Alanine--tRNA ligase (872 aa).

Zn(2+) contacts are provided by His-561, His-565, Cys-662, and His-666.

Belongs to the class-II aminoacyl-tRNA synthetase family. It depends on Zn(2+) as a cofactor.

It is found in the cytoplasm. The catalysed reaction is tRNA(Ala) + L-alanine + ATP = L-alanyl-tRNA(Ala) + AMP + diphosphate. In terms of biological role, catalyzes the attachment of alanine to tRNA(Ala) in a two-step reaction: alanine is first activated by ATP to form Ala-AMP and then transferred to the acceptor end of tRNA(Ala). Also edits incorrectly charged Ser-tRNA(Ala) and Gly-tRNA(Ala) via its editing domain. This is Alanine--tRNA ligase from Thiobacillus denitrificans (strain ATCC 25259 / T1).